The chain runs to 64 residues: Large ribosomal subunit protein uL30 (64 aa).

The protein belongs to the universal ribosomal protein uL30 family. In terms of assembly, part of the 50S ribosomal subunit.

The sequence is that of Large ribosomal subunit protein uL30 from Methylorubrum populi (strain ATCC BAA-705 / NCIMB 13946 / BJ001) (Methylobacterium populi).